The primary structure comprises 300 residues: uncharacterized protein (300 aa).

The N-terminal stretch at 1-20 is a signal peptide; that stretch reads MRLLISCILILSILVNFISG. Residues 21 to 279 are Extracellular-facing; the sequence is HAVLVAPTPF…PCSIYGDGNG (259 aa). N-linked (GlcNAc...) asparagine glycans are attached at residues Asn-56, Asn-217, and Asn-278. The helical transmembrane segment at 280-300 threads the bilayer; that stretch reads SNLIIIPTLLIISILSLILMF.

The protein localises to the membrane. This is an uncharacterized protein from Dictyostelium discoideum (Social amoeba).